The primary structure comprises 389 residues: Sedoheptulose-1,7-bisphosphatase, chloroplastic (389 aa).

Cys-115 and Cys-120 are disulfide-bonded. Asp-126, Glu-155, Asp-173, Leu-175, and Asp-176 together coordinate Mg(2+). Substrate-binding positions include 176-179, Tyr-287, and Lys-317; that span reads DGSS. Glu-323 is a binding site for Mg(2+).

It belongs to the FBPase class 1 family. In terms of assembly, homodimer. It depends on Mg(2+) as a cofactor.

Its subcellular location is the plastid. The protein localises to the chloroplast. The enzyme catalyses D-sedoheptulose 1,7-bisphosphate + H2O = D-sedoheptulose 7-phosphate + phosphate. The protein operates within carbohydrate biosynthesis; Calvin cycle. In Chlamydomonas reinhardtii (Chlamydomonas smithii), this protein is Sedoheptulose-1,7-bisphosphatase, chloroplastic (CSBP).